Here is a 167-residue protein sequence, read N- to C-terminus: Small ribosomal subunit protein uS5 (167 aa).

Residues 11 to 74 (LQEKLIAVNR…EKARRAMINV (64 aa)) form the S5 DRBM domain.

Belongs to the universal ribosomal protein uS5 family. In terms of assembly, part of the 30S ribosomal subunit. Contacts proteins S4 and S8.

With S4 and S12 plays an important role in translational accuracy. Functionally, located at the back of the 30S subunit body where it stabilizes the conformation of the head with respect to the body. This Yersinia pseudotuberculosis serotype O:1b (strain IP 31758) protein is Small ribosomal subunit protein uS5.